Reading from the N-terminus, the 137-residue chain is Protein E6 (137 aa).

2 zinc fingers span residues Cys17 to Cys53 and Cys90 to Cys127.

It belongs to the papillomaviridae E6 protein family. Forms homodimers. Interacts with ubiquitin-protein ligase UBE3A/E6-AP; this interaction stimulates UBE3A ubiquitin activity. Interacts with host BAK1.

Its subcellular location is the host cytoplasm. It localises to the host nucleus. Its function is as follows. Plays a major role in the induction and maintenance of cellular transformation. E6 associates with host UBE3A/E6-AP ubiquitin-protein ligase and modulates its activity. Protects host keratinocytes from apoptosis by mediating the degradation of host BAK1. May also inhibit host immune response. In Bos taurus (Bovine), this protein is Protein E6.